A 516-amino-acid chain; its full sequence is Ribonuclease Y (516 aa).

A helical transmembrane segment spans residues 1-21 (MLIKIVIACVITAIIVALIAW). One can recognise a KH domain in the interval 206–269 (TISVVQLPND…ETARIALEKL (64 aa)). Residues 332–425 (ALKHSIEVAI…VQAADTISAA (94 aa)) form the HD domain.

Belongs to the RNase Y family.

The protein localises to the cell membrane. Functionally, endoribonuclease that initiates mRNA decay. This Lachnoclostridium phytofermentans (strain ATCC 700394 / DSM 18823 / ISDg) (Clostridium phytofermentans) protein is Ribonuclease Y.